A 288-amino-acid polypeptide reads, in one-letter code: Rhythmically expressed gene 5 protein (288 aa).

Expressed in head, but not in the body. Expression levels oscillate with the circadian rhythm.

In terms of biological role, involved in the generation of biological rhythms (Potential). In the head, oscillates in abundance with a daily peak during early night, even under constant darkness. Oscillation is dependent on period (per) function. This Drosophila melanogaster (Fruit fly) protein is Rhythmically expressed gene 5 protein (Reg-5).